A 388-amino-acid polypeptide reads, in one-letter code: S-adenosylmethionine synthase (388 aa).

H17 contacts ATP. D19 serves as a coordination point for Mg(2+). K(+) is bound at residue E45. L-methionine-binding residues include E58 and Q106. Residues 106-116 (QSAHIAQGVDK) are flexible loop. Residues 166-168 (DAK), D241, 247-248 (RK), A264, and K268 each bind ATP. D241 is a binding site for L-methionine. K272 is a binding site for L-methionine.

The protein belongs to the AdoMet synthase family. In terms of assembly, homotetramer; dimer of dimers. Requires Mg(2+) as cofactor. K(+) serves as cofactor.

It localises to the cytoplasm. The catalysed reaction is L-methionine + ATP + H2O = S-adenosyl-L-methionine + phosphate + diphosphate. The protein operates within amino-acid biosynthesis; S-adenosyl-L-methionine biosynthesis; S-adenosyl-L-methionine from L-methionine: step 1/1. Catalyzes the formation of S-adenosylmethionine (AdoMet) from methionine and ATP. The overall synthetic reaction is composed of two sequential steps, AdoMet formation and the subsequent tripolyphosphate hydrolysis which occurs prior to release of AdoMet from the enzyme. In Cereibacter sphaeroides (strain ATCC 17023 / DSM 158 / JCM 6121 / CCUG 31486 / LMG 2827 / NBRC 12203 / NCIMB 8253 / ATH 2.4.1.) (Rhodobacter sphaeroides), this protein is S-adenosylmethionine synthase.